The primary structure comprises 637 residues: Extracellular metalloproteinase 2 (637 aa).

Positions 1–20 (MRSFLLASLASVATLKSAQA) are cleaved as a signal peptide. A propeptide spanning residues 21–244 (HPAHSTRGLS…VHAVVDYSAD (224 aa)) is cleaved from the precursor. 4 N-linked (GlcNAc...) asparagine glycosylation sites follow: asparagine 302, asparagine 328, asparagine 337, and asparagine 413. Residue histidine 430 coordinates Zn(2+). Residue glutamate 431 is part of the active site. Histidine 434 provides a ligand contact to Zn(2+).

The protein belongs to the peptidase M36 family. The cofactor is Zn(2+).

It localises to the secreted. Secreted metalloproteinase that allows assimilation of proteinaceous substrates. This chain is Extracellular metalloproteinase 2 (MEP2), found in Phaeosphaeria nodorum (strain SN15 / ATCC MYA-4574 / FGSC 10173) (Glume blotch fungus).